The primary structure comprises 159 residues: MSYNITTPSQFVFLSSAWADPLELINLCTNALGNQFQTQQARTVVQRQFSEVWKPSPQVTVRFPDRDFKVYRYNAVLDPLVTALLGAFDTRNRIIEVENQANPTTAETLDATRRVDDATVAIRSAINNLIVELIRGTGSYNRSSFESSSGLVWTSGPAT.

An N-acetylserine; by host modification is found at Ser-2.

This sequence belongs to the virgaviridae capsid protein family.

The protein localises to the virion. In terms of biological role, capsid protein self-assembles to form rod-shaped virions about 18 nm in diameter with a central canal enclosing the viral genomic RNA. The chain is Capsid protein (CP) from Tobacco mosaic virus (strain ER) (TMV).